We begin with the raw amino-acid sequence, 166 residues long: UPF0561 protein C2orf68 (166 aa).

Residues 32–107 (NQIARDDYDK…SELEPSGHQL (76 aa)) form a disordered region. Composition is skewed to basic and acidic residues over residues 34–49 (IARD…AAKE) and 73–85 (RHRD…RNPD). Residues 91 to 104 (ESSSSGGSELEPSG) are compositionally biased toward low complexity.

This sequence belongs to the UPF0561 family.

The sequence is that of UPF0561 protein C2orf68 (C2orf68) from Homo sapiens (Human).